Here is a 145-residue protein sequence, read N- to C-terminus: Flagellar assembly factor FliW (145 aa).

Belongs to the FliW family. Interacts with translational regulator CsrA and flagellin(s).

It localises to the cytoplasm. Acts as an anti-CsrA protein, binds CsrA and prevents it from repressing translation of its target genes, one of which is flagellin. Binds to flagellin and participates in the assembly of the flagellum. The protein is Flagellar assembly factor FliW of Anoxybacillus flavithermus (strain DSM 21510 / WK1).